Reading from the N-terminus, the 65-residue chain is Photosystem II reaction center protein Z (65 aa).

A run of 2 helical transmembrane segments spans residues 8-28 (AVFALVLLSFVLIVAVPVALA) and 41-61 (YAGAALWTSLIIVIGVLDSVV).

The protein belongs to the PsbZ family. As to quaternary structure, PSII is composed of 1 copy each of membrane proteins PsbA, PsbB, PsbC, PsbD, PsbE, PsbF, PsbH, PsbI, PsbJ, PsbK, PsbL, PsbM, PsbT, PsbX, PsbY, PsbZ, Psb30/Ycf12, at least 3 peripheral proteins of the oxygen-evolving complex and a large number of cofactors. It forms dimeric complexes.

It localises to the plastid. The protein resides in the cyanelle thylakoid membrane. Functionally, may control the interaction of photosystem II (PSII) cores with the light-harvesting antenna, regulates electron flow through the 2 photosystem reaction centers. PSII is a light-driven water plastoquinone oxidoreductase, using light energy to abstract electrons from H(2)O, generating a proton gradient subsequently used for ATP formation. The sequence is that of Photosystem II reaction center protein Z from Cyanophora paradoxa.